The chain runs to 132 residues: MDVTRLLLATLLVFLCFFTAYSHLPPEEKLRDDRSLRSNSSVNLLDFPSVSIVALNKKSKQISRKEAEKKRSSKKEASMKKVARPRTPLSAPCVATRDSCKPPAPACCDPCASCQCRFFRSACSCRVLSLNC.

The signal sequence occupies residues 1-22 (MDVTRLLLATLLVFLCFFTAYS). N-linked (GlcNAc...) asparagine glycosylation occurs at N39. The tract at residues 62–88 (ISRKEAEKKRSSKKEASMKKVARPRTP) is disordered. A compositionally biased stretch (basic and acidic residues) spans 63-79 (SRKEAEKKRSSKKEASM). Disulfide bonds link C93-C108, C100-C114, C107-C125, C111-C132, and C116-C123. The 40-residue stretch at 93–132 (CVATRDSCKPPAPACCDPCASCQCRFFRSACSCRVLSLNC) folds into the Agouti domain.

It localises to the secreted. In terms of biological role, involved in the regulation of melanogenesis. The binding of ASP to MC1R precludes alpha-MSH initiated signaling and thus blocks production of cAMP, leading to a down-regulation of eumelanogenesis (brown/black pigment) and thus increasing synthesis of pheomelanin (yellow/red pigment). The protein is Agouti-signaling protein (ASIP) of Chlorocebus aethiops (Green monkey).